An 88-amino-acid chain; its full sequence is Potassium channel toxin MeuTXKbeta3-meucin-24 (88 aa).

The signal sequence occupies residues 1 to 22; that stretch reads MMKQQFFLFLAVIVMISSVIEA. The BetaSPN-type CS-alpha/beta domain maps to 55–88; sequence EYACPVIEKWCEDHCQAKNAIGRCENTECKCLSK. 3 cysteine pairs are disulfide-bonded: Cys-58–Cys-78, Cys-65–Cys-83, and Cys-69–Cys-85.

It belongs to the long chain scorpion toxin family. Class 2 subfamily. In terms of tissue distribution, expressed by the venom gland.

The protein localises to the secreted. In terms of biological role, inhibits voltage-gated potassium channels. Its function is as follows. The synthetic meucin-24 inhibits the development of P.berghei ookinetes, kills intraerythrocytic P.falciparum, and is cytotoxic to the Drosophila S2 cells at micromolar concentrations. No antibacterial, antifungal and hemolytic activities have been found at micromolar concentrations. This chain is Potassium channel toxin MeuTXKbeta3-meucin-24, found in Mesobuthus eupeus (Lesser Asian scorpion).